The following is a 181-amino-acid chain: Adenine phosphoribosyltransferase (181 aa).

It belongs to the purine/pyrimidine phosphoribosyltransferase family. Homodimer.

The protein resides in the cytoplasm. The enzyme catalyses AMP + diphosphate = 5-phospho-alpha-D-ribose 1-diphosphate + adenine. It participates in purine metabolism; AMP biosynthesis via salvage pathway; AMP from adenine: step 1/1. Functionally, catalyzes a salvage reaction resulting in the formation of AMP, that is energically less costly than de novo synthesis. The chain is Adenine phosphoribosyltransferase from Methylorubrum populi (strain ATCC BAA-705 / NCIMB 13946 / BJ001) (Methylobacterium populi).